Reading from the N-terminus, the 59-residue chain is Putative movement protein p6.6 (59 aa).

A helical membrane pass occupies residues 13–35 (RVGPLLVLCLLLLLILFSRSWNV).

Its subcellular location is the membrane. Functionally, cell-to-cell movement. This Panicum mosaic virus (strain United States/Kansas 109S) (PMV) protein is Putative movement protein p6.6.